Here is a 252-residue protein sequence, read N- to C-terminus: Ribosome maturation factor RimP (252 aa).

The segment at 188 to 252 (QGAAPGTEGG…PAAGPGAQDE (65 aa)) is disordered. A compositionally biased stretch (basic residues) spans 208–224 (ARRPHQPKPKKAKKKGP).

This sequence belongs to the RimP family.

Its subcellular location is the cytoplasm. Its function is as follows. Required for maturation of 30S ribosomal subunits. This chain is Ribosome maturation factor RimP, found in Rhodospirillum centenum (strain ATCC 51521 / SW).